The sequence spans 84 residues: Beta-defensin 119 (84 aa).

The signal sequence occupies residues 1-21; that stretch reads MKLLYLFLAILLAIEEPVISG. 3 disulfides stabilise this stretch: C28–C55, C35–C49, and C39–C56.

The protein belongs to the beta-defensin family.

It is found in the secreted. Functionally, has antibacterial activity. This is Beta-defensin 119 (DEFB119) from Gorilla gorilla gorilla (Western lowland gorilla).